The chain runs to 222 residues: Gamma-glutamylcyclotransferase and putative RNase MJ0434 (222 aa).

Arginine 75 is an active-site residue. The RX(4)HXY motif signature appears at 75–82; sequence RDILIRKY. O-di-AMP-tyrosine is present on tyrosine 82.

The protein in the N-terminal section; belongs to the HepT RNase toxin family. It in the C-terminal section; belongs to the gamma-glutamylcyclotransferase family. In terms of assembly, homodimer, probably forms a complex with cognate antitoxin MJ0435. Post-translationally, modified by cognate antitoxin MJ0435; probably at least 2 successive AMPylation events occur on Tyr-82.

Functionally, probable toxic component of a putative type VII toxin-antitoxin (TA) system, probably an RNase. Probably neutralized by cognate antitoxin MJ0435. Neutralization may be due to AMPylation by MJ0435. The polypeptide is Gamma-glutamylcyclotransferase and putative RNase MJ0434 (Methanocaldococcus jannaschii (strain ATCC 43067 / DSM 2661 / JAL-1 / JCM 10045 / NBRC 100440) (Methanococcus jannaschii)).